The following is a 2209-amino-acid chain: Kinetochore-associated protein 1 (2209 aa).

Thr13 bears the Phosphothreonine; by TTK mark. Ser15 bears the Phosphoserine; by TTK mark. A Phosphothreonine modification is found at Thr1035. Ser1045 carries the phosphoserine modification.

Interacts with ZW10; the interaction is required for stable association with the kinetochore. Component of the RZZ complex composed of KNTC1/ROD, ZW10 and ZWILCH; in the complex interacts directly with ZWILCH. As to expression, high expression in testis.

It localises to the cytoplasm. It is found in the nucleus. The protein localises to the chromosome. Its subcellular location is the centromere. The protein resides in the kinetochore. It localises to the cytoskeleton. It is found in the spindle. In terms of biological role, essential component of the mitotic checkpoint, which prevents cells from prematurely exiting mitosis. Required for the assembly of the dynein-dynactin and MAD1-MAD2 complexes onto kinetochores. Its function related to the spindle assembly machinery is proposed to depend on its association in the mitotic RZZ complex. The protein is Kinetochore-associated protein 1 (KNTC1) of Homo sapiens (Human).